The following is a 302-amino-acid chain: Oxygen-dependent coproporphyrinogen-III oxidase (302 aa).

Ser94 contacts substrate. Residues His98 and His108 each coordinate a divalent metal cation. His108 (proton donor) is an active-site residue. Residue 110–112 coordinates substrate; sequence NVR. Positions 147 and 177 each coordinate a divalent metal cation. Residues 242–277 are important for dimerization; it reads YVEFNLVYDRGTIFGLQSGGRTESILMSLPPLVRWD. 260 to 262 provides a ligand contact to substrate; sequence GGR.

It belongs to the aerobic coproporphyrinogen-III oxidase family. Homodimer. It depends on a divalent metal cation as a cofactor.

The protein resides in the cytoplasm. It carries out the reaction coproporphyrinogen III + O2 + 2 H(+) = protoporphyrinogen IX + 2 CO2 + 2 H2O. It participates in porphyrin-containing compound metabolism; protoporphyrin-IX biosynthesis; protoporphyrinogen-IX from coproporphyrinogen-III (O2 route): step 1/1. Involved in the heme biosynthesis. Catalyzes the aerobic oxidative decarboxylation of propionate groups of rings A and B of coproporphyrinogen-III to yield the vinyl groups in protoporphyrinogen-IX. The chain is Oxygen-dependent coproporphyrinogen-III oxidase from Alcanivorax borkumensis (strain ATCC 700651 / DSM 11573 / NCIMB 13689 / SK2).